A 599-amino-acid chain; its full sequence is E3 ubiquitin-protein ligase Kcmf1 (599 aa).

The segment at 4 to 60 adopts a ZZ-type zinc-finger fold; the sequence is HEGVSCDSCLKSNFNGRRYKCLICYDYDLCADCYEDGVTSTRHLVEHPMQCILTRSD. 8 residues coordinate Zn(2+): Cys9, Cys12, Cys24, Cys27, Cys33, Cys36, His46, and His50. The C2H2-type zinc finger occupies 78–101; it reads FTCPYCKKMGFSDATLLEHVSAEH. Disordered regions lie at residues 155 to 193, 229 to 253, 269 to 294, 466 to 486, and 507 to 599; these read HGGG…PSGR, DRQQ…VSTS, GSGG…NLRT, VEQQ…VNQM, and NTTQ…PDTR. Low complexity-rich tracts occupy residues 160–170 and 180–192; these read RRIPGRTLGGP and SSSS…SPSG. The segment covering 269–285 has biased composition (gly residues); sequence GSGGSGAVGSGSGGGSG. A compositionally biased stretch (gly residues) spans 513-532; it reads GTGGLGGAGATAAPGGGASG. The segment covering 538–547 has biased composition (basic and acidic residues); it reads TADRGIERRS. Over residues 559–593 the composition is skewed to low complexity; sequence SQQPQQQQQSTANPAASQQKYKQNASAATAAGNTN.

Belongs to the KCMF1 family. Interacts with poe.

It carries out the reaction S-ubiquitinyl-[E2 ubiquitin-conjugating enzyme]-L-cysteine + [acceptor protein]-L-lysine = [E2 ubiquitin-conjugating enzyme]-L-cysteine + N(6)-ubiquitinyl-[acceptor protein]-L-lysine.. Its function is as follows. Has intrinsic E3 ubiquitin ligase activity and promotes ubiquitination. Involved in the negative regulation of the Ras/MAPK signaling pathway in the wing by acting with the E2 enzyme Unc6 and the putative E3 ligases poe and Ufd4 to mediate the ubiquitination and proteasomal degradation of rl/MAPK. This is E3 ubiquitin-protein ligase Kcmf1 from Drosophila melanogaster (Fruit fly).